The primary structure comprises 555 residues: Disabled homolog 1 (555 aa).

Residues 1 to 26 (MSTETELQVAVKTSAKKDSRKKGQDR) form a disordered region. Residues 15 to 26 (AKKDSRKKGQDR) show a composition bias toward basic and acidic residues. Residues 36–189 (KGEGVRYKAK…CEQAVYQTIL (154 aa)) enclose the PID domain. Phosphotyrosine is present on residues tyrosine 198, tyrosine 220, and tyrosine 232. Disordered stretches follow at residues 384–410 (LTPL…RQKM), 418–437 (FQMA…PSLT), and 468–555 (NLTP…QAGS). Positions 391–403 (PGTSDSTRPSPQT) are enriched in polar residues. 2 stretches are compositionally biased toward low complexity: residues 470–479 (TPVTSTTPST) and 487–501 (PRQS…SHAS). Serine 491 carries the post-translational modification Phosphoserine; by CDK5. The segment covering 504-513 (TTDDIFEEGF) has biased composition (acidic residues).

Associates with the SH2 domains of SRC, FYN and ABL. Interacts (phosphorylated on tyrosine residues) with CRK and CRKL (via respective SH2 domain). Interacts with DAB2IP, SIAH1, LRP8 and VLDLR. Interacts with LRP1. Interacts with APLP1 (via NPXY motif). Interacts with DAB2IP. Interacts with ZSWIM8. Post-translationally, phosphorylated by FYN on Tyr-198 and Tyr-220 upon reelin induction in embryonic neurons. Also phosphorylated on Ser-491 independently of reelin signaling. Ubiquitinated by various cullin-5-RING E3 ubiquitin-protein ligase complexes (ECS complexes) following ligand-binding and phosphorylation, leading to its degradation. Ubiquitinated by the ECS(SOCS7) complex in the cortical plate of the developing cerebral cortex following ligand-binding and phosphorylation by FYN, leading to its degradation by the proteasome. Recognized by ZSWIM8 through a disorder targets misorder mechanism that eliminates misfolded DAB1 via ubiquitination and proteasomal degradation.

Its subcellular location is the cytoplasm. Its function is as follows. Signaling adapter of the reelin-mediated signaling pathway, which regulates the migration and differentiation of postmitotic neurons during brain development. Mediates intracellular transduction of Reelin signaling following reelin (RELN)-binding to its receptor: acts by docking proteins through its phosphotyrosine residues and PID domain. This Macaca fascicularis (Crab-eating macaque) protein is Disabled homolog 1 (DAB1).